Reading from the N-terminus, the 156-residue chain is Small ribosomal subunit protein uS7 (156 aa).

This sequence belongs to the universal ribosomal protein uS7 family. Part of the 30S ribosomal subunit. Contacts proteins S9 and S11.

Functionally, one of the primary rRNA binding proteins, it binds directly to 16S rRNA where it nucleates assembly of the head domain of the 30S subunit. Is located at the subunit interface close to the decoding center, probably blocks exit of the E-site tRNA. This Hyphomonas neptunium (strain ATCC 15444) protein is Small ribosomal subunit protein uS7.